The following is a 144-amino-acid chain: Transcription antitermination protein NusB (144 aa).

The protein belongs to the NusB family.

In terms of biological role, involved in transcription antitermination. Required for transcription of ribosomal RNA (rRNA) genes. Binds specifically to the boxA antiterminator sequence of the ribosomal RNA (rrn) operons. The polypeptide is Transcription antitermination protein NusB (Histophilus somni (strain 129Pt) (Haemophilus somnus)).